A 472-amino-acid chain; its full sequence is 2-methylcitrate synthase, mitochondrial (472 aa).

The N-terminal 29 residues, 1–29 (MALNLTSSRRALGSLKPLTRAAFSGVRGY), are a transit peptide targeting the mitochondrion. CoA contacts are provided by Arg75 and Lys193. Residue His271 coordinates oxaloacetate. Leu306 contacts CoA. Residue His307 is part of the active site. Residues Val348, Gly350, and Tyr351 each coordinate CoA. Oxaloacetate contacts are provided by His353 and Arg362. The active site involves His353. 3 residues coordinate CoA: Thr402, Lys403, and Asn408. The active site involves Asp410. Arg436 and Arg456 together coordinate oxaloacetate.

It belongs to the citrate synthase family. In terms of assembly, homodimer.

The protein resides in the mitochondrion matrix. The catalysed reaction is propanoyl-CoA + oxaloacetate + H2O = (2S,3S)-2-methylcitrate + CoA + H(+). It catalyses the reaction oxaloacetate + acetyl-CoA + H2O = citrate + CoA + H(+). It functions in the pathway organic acid metabolism; propanoate degradation. In terms of biological role, component of the methylcitrate cycle that catalyzes the synthesis of (2S,3S)-2-methylcitrate from propionyl-CoA and oxaloacetate. Plays an important role in detoxification of propionyl-CoA, an inhibitor of both primary and secondary metabolism. Also has citrate synthase activity using as substrates acetyl-CoA and oxaloacetate. The protein is 2-methylcitrate synthase, mitochondrial of Gibberella moniliformis (Maize ear and stalk rot fungus).